A 107-amino-acid polypeptide reads, in one-letter code: Anti-adapter protein IraM (107 aa).

The protein belongs to the IraM/RssC family.

It localises to the cytoplasm. Inhibits RpoS proteolysis by regulating RssB activity, thereby increasing the stability of the sigma stress factor RpoS during magnesium starvation. The sequence is that of Anti-adapter protein IraM from Escherichia coli (strain 55989 / EAEC).